A 331-amino-acid polypeptide reads, in one-letter code: Autoinducer 2 import system permease protein LsrC (331 aa).

9 helical membrane passes run Leu14–Leu34, Leu39–Leu59, Ile70–Val90, Leu93–Leu113, Ile115–Leu135, Leu157–Leu177, Ile206–Ala226, Gly252–Leu272, and Leu284–Asp304.

This sequence belongs to the binding-protein-dependent transport system permease family. AraH/RbsC subfamily. As to quaternary structure, the complex is composed of two ATP-binding proteins (LsrA), two transmembrane proteins (LsrC and LsrD) and a solute-binding protein (LsrB).

It is found in the cell inner membrane. Part of the ABC transporter complex LsrABCD involved in autoinducer 2 (AI-2) import. Probably responsible for the translocation of the substrate across the membrane. The protein is Autoinducer 2 import system permease protein LsrC (lsrC) of Photorhabdus luminescens (Xenorhabdus luminescens).